Consider the following 196-residue polypeptide: Probable malonic semialdehyde reductase RutE (196 aa).

Belongs to the nitroreductase family. HadB/RutE subfamily. FMN is required as a cofactor.

The enzyme catalyses 3-hydroxypropanoate + NADP(+) = 3-oxopropanoate + NADPH + H(+). Its function is as follows. May reduce toxic product malonic semialdehyde to 3-hydroxypropionic acid, which is excreted. This is Probable malonic semialdehyde reductase RutE from Escherichia coli O7:K1 (strain IAI39 / ExPEC).